We begin with the raw amino-acid sequence, 215 residues long: Orotate phosphoribosyltransferase (215 aa).

Lys25 lines the 5-phospho-alpha-D-ribose 1-diphosphate pocket. 33-34 (FF) contributes to the orotate binding site. Residues 71-72 (YK), Arg98, Lys99, Lys102, His104, and 124-132 (DDVITAGTA) each bind 5-phospho-alpha-D-ribose 1-diphosphate. The orotate site is built by Thr128 and Arg156.

This sequence belongs to the purine/pyrimidine phosphoribosyltransferase family. PyrE subfamily. In terms of assembly, homodimer.

It catalyses the reaction orotidine 5'-phosphate + diphosphate = orotate + 5-phospho-alpha-D-ribose 1-diphosphate. It functions in the pathway pyrimidine metabolism; UMP biosynthesis via de novo pathway; UMP from orotate: step 1/2. Its function is as follows. Catalyzes the transfer of a ribosyl phosphate group from 5-phosphoribose 1-diphosphate to orotate, leading to the formation of orotidine monophosphate (OMP). This is Orotate phosphoribosyltransferase (ura5) from Schizosaccharomyces pombe (strain 972 / ATCC 24843) (Fission yeast).